A 138-amino-acid polypeptide reads, in one-letter code: Large ribosomal subunit protein eL14B (138 aa).

Ser2 carries the post-translational modification N-acetylserine.

This sequence belongs to the eukaryotic ribosomal protein eL14 family. Component of the large ribosomal subunit (LSU). Mature yeast ribosomes consist of a small (40S) and a large (60S) subunit. The 40S small subunit contains 1 molecule of ribosomal RNA (18S rRNA) and 33 different proteins (encoded by 57 genes). The large 60S subunit contains 3 rRNA molecules (25S, 5.8S and 5S rRNA) and 46 different proteins (encoded by 81 genes). In terms of processing, N-terminally acetylated by acetyltransferase NatA.

It localises to the cytoplasm. In terms of biological role, component of the ribosome, a large ribonucleoprotein complex responsible for the synthesis of proteins in the cell. The small ribosomal subunit (SSU) binds messenger RNAs (mRNAs) and translates the encoded message by selecting cognate aminoacyl-transfer RNA (tRNA) molecules. The large subunit (LSU) contains the ribosomal catalytic site termed the peptidyl transferase center (PTC), which catalyzes the formation of peptide bonds, thereby polymerizing the amino acids delivered by tRNAs into a polypeptide chain. The nascent polypeptides leave the ribosome through a tunnel in the LSU and interact with protein factors that function in enzymatic processing, targeting, and the membrane insertion of nascent chains at the exit of the ribosomal tunnel. In Saccharomyces cerevisiae (strain ATCC 204508 / S288c) (Baker's yeast), this protein is Large ribosomal subunit protein eL14B.